The following is a 519-amino-acid chain: Flavin-dependent halogenase rdc2 (519 aa).

The N-terminal stretch at 1-21 (MSVPKSCTILVAGGGPAGSYA) is a signal peptide. 3 residues coordinate FAD: Gly-14, Ala-17, and Glu-47. Residues Ser-324 and Gly-325 each contribute to the chloride site.

The protein belongs to the flavin-dependent halogenase family.

It participates in secondary metabolite biosynthesis. In terms of biological role, flavin-dependent halogenase; part of the gene cluster that mediates the biosynthesis of radicicol, a resorcylic acid lactone (RAL) that irreversibly inhibits the HSP90 molecular chaperone, an important target for cancer chemotherapy. Within the cluster, rdc2 is involved in the chlorination of the resorcylic acid lactone (RAL) structure to convert monocillin I into radicicol. Also chlorinates monocillin II to produce 6-cholomonocillin II and monocilllin IV to produce 13-chloromonocillin IV. In contrast to most fungal halogenases, rdc2 has a broad substrate specificity and can accept a variety of macrolactones as the substrates to generate chlorinated derivatives, including dihydroresorcylide, zearalenone, curvularin, or even curcumin. Rdc2 is able to dichlorinate dihydroresorcylide and monocillin IV. Dihydroresorcylide is first chlorinated at position 11 to produce 11-chlorodihydroresorcylide which can be further chlorinated by rdc2 at possition 13. Mororeover, rdc2 can incorporate bromine into dihydroresorcylide to yield the corresponding mono- and di-brominated derivatives. Finally, rdc2 is also able to halogenate the isoquinolines 4-hydroxyisoquinoline and 6-hydroxyisoquinoline into 3-chloro-4-hydroxyisoquinoline and 5-chloro-6-hydroxyisoquinoline, respectively. The radicicol cluster encodes only two apparent post-PKS enzymes, a cytochrome P450 monooxygenase (rdc4) and a non-heme halogenase (rdc2) that could introduce the epoxide and the chlorine, respectively. If this cluster includes all the genes required for radicicol biosynthesis, the remaining structural features of radicicol are presumably generated by the PKSs rdc1 and rdc5. The C-2' ketone could arise if the R-PKS rdc5 and NR-PKS rdc1 each carry out four iterations, in contrast to the five iteration-three iteration split for the hypothemycin PKSs. The origin of the cis 5',6' double bond is not known. The radicicol R-PKS rdc5 ER domain may catalyze either double bond isomerization or reduction in the third iteration. In Metacordyceps chlamydosporia (Nematophagous fungus), this protein is Flavin-dependent halogenase rdc2.